The chain runs to 161 residues: MNINATIFGQTIAFFLFVFFCMKYIWPNLISLVEKRRENIAQALNEAKQAKLNLKISKEKAKKRIESAQIKCKNIINEANETKKLLIEEAKKEAIKIKEHIISQGRLDILDEKKRMCEDLKTKISEIIVMSVEKIIESSINKKISDNIIERSISKINKIKG.

A helical transmembrane segment spans residues 12-32 (IAFFLFVFFCMKYIWPNLISL).

It belongs to the ATPase B chain family. In terms of assembly, F-type ATPases have 2 components, F(1) - the catalytic core - and F(0) - the membrane proton channel. F(1) has five subunits: alpha(3), beta(3), gamma(1), delta(1), epsilon(1). F(0) has three main subunits: a(1), b(2) and c(10-14). The alpha and beta chains form an alternating ring which encloses part of the gamma chain. F(1) is attached to F(0) by a central stalk formed by the gamma and epsilon chains, while a peripheral stalk is formed by the delta and b chains.

It localises to the cell membrane. Its function is as follows. F(1)F(0) ATP synthase produces ATP from ADP in the presence of a proton or sodium gradient. F-type ATPases consist of two structural domains, F(1) containing the extramembraneous catalytic core and F(0) containing the membrane proton channel, linked together by a central stalk and a peripheral stalk. During catalysis, ATP synthesis in the catalytic domain of F(1) is coupled via a rotary mechanism of the central stalk subunits to proton translocation. Component of the F(0) channel, it forms part of the peripheral stalk, linking F(1) to F(0). This chain is ATP synthase subunit b, found in Wigglesworthia glossinidia brevipalpis.